A 603-amino-acid chain; its full sequence is NADH-ubiquinone oxidoreductase chain 5 (603 aa).

Helical transmembrane passes span 4 to 24, 36 to 56, 87 to 107, 122 to 142, 171 to 191, 211 to 233, 241 to 261, 272 to 292, 301 to 320, 325 to 347, 370 to 390, 406 to 422, 488 to 508, and 583 to 603; these read YTSIMLMTLASLALPIFATLV, VKTTMMYAFITSLIPTTLYIF, MMFIPIALFITWSIMEFSLWY, LIFLITMLILITANNLFQLFI, AVLYNRIGDIGLILAMVWFLL, LPLMGLLLAAVGKSAQFGLHPWL, TPVSALLHSSTMVVAGVFLLI, LTQNLTLCLGAITTLFMAMCA, IVAFSTSSQLGLMMITIGIN, AFLHICTHAFFKAMLFICSGSII, STSLIIGNLALTGIPFLTGFY, AWALSITLIATSLTSAY, LLALYMTALGFIITLDLTLMT, and MIKLYFLSFLIPLALALLLMV.

The protein belongs to the complex I subunit 5 family. As to quaternary structure, core subunit of respiratory chain NADH dehydrogenase (Complex I) which is composed of 45 different subunits.

The protein resides in the mitochondrion inner membrane. The enzyme catalyses a ubiquinone + NADH + 5 H(+)(in) = a ubiquinol + NAD(+) + 4 H(+)(out). Functionally, core subunit of the mitochondrial membrane respiratory chain NADH dehydrogenase (Complex I) which catalyzes electron transfer from NADH through the respiratory chain, using ubiquinone as an electron acceptor. Essential for the catalytic activity and assembly of complex I. In Papio hamadryas (Hamadryas baboon), this protein is NADH-ubiquinone oxidoreductase chain 5 (MT-ND5).